We begin with the raw amino-acid sequence, 570 residues long: Sulfite reductase [NADPH] hemoprotein beta-component (570 aa).

[4Fe-4S] cluster is bound by residues C434, C440, C479, and C483. C483 contributes to the siroheme binding site.

Belongs to the nitrite and sulfite reductase 4Fe-4S domain family. As to quaternary structure, alpha(8)-beta(8). The alpha component is a flavoprotein, the beta component is a hemoprotein. The cofactor is siroheme. Requires [4Fe-4S] cluster as cofactor.

It carries out the reaction hydrogen sulfide + 3 NADP(+) + 3 H2O = sulfite + 3 NADPH + 4 H(+). Its pathway is sulfur metabolism; hydrogen sulfide biosynthesis; hydrogen sulfide from sulfite (NADPH route): step 1/1. Functionally, component of the sulfite reductase complex that catalyzes the 6-electron reduction of sulfite to sulfide. This is one of several activities required for the biosynthesis of L-cysteine from sulfate. The polypeptide is Sulfite reductase [NADPH] hemoprotein beta-component (cysI) (Escherichia coli (strain K12)).